Reading from the N-terminus, the 80-residue chain is ATP synthase subunit c (80 aa).

Transmembrane regions (helical) follow at residues 11 to 31 and 53 to 73; these read MAAAVMMGLAAIGAAIGIGIL and FFVVMGLVDAIPMIAVGLGLY.

Belongs to the ATPase C chain family. As to quaternary structure, F-type ATPases have 2 components, F(1) - the catalytic core - and F(0) - the membrane proton channel. F(1) has five subunits: alpha(3), beta(3), gamma(1), delta(1), epsilon(1). F(0) has three main subunits: a(1), b(2) and c(10-14). The alpha and beta chains form an alternating ring which encloses part of the gamma chain. F(1) is attached to F(0) by a central stalk formed by the gamma and epsilon chains, while a peripheral stalk is formed by the delta and b chains.

Its subcellular location is the cell inner membrane. F(1)F(0) ATP synthase produces ATP from ADP in the presence of a proton or sodium gradient. F-type ATPases consist of two structural domains, F(1) containing the extramembraneous catalytic core and F(0) containing the membrane proton channel, linked together by a central stalk and a peripheral stalk. During catalysis, ATP synthesis in the catalytic domain of F(1) is coupled via a rotary mechanism of the central stalk subunits to proton translocation. In terms of biological role, key component of the F(0) channel; it plays a direct role in translocation across the membrane. A homomeric c-ring of between 10-14 subunits forms the central stalk rotor element with the F(1) delta and epsilon subunits. The chain is ATP synthase subunit c from Erwinia tasmaniensis (strain DSM 17950 / CFBP 7177 / CIP 109463 / NCPPB 4357 / Et1/99).